The primary structure comprises 230 residues: Orotidine 5'-phosphate decarboxylase (230 aa).

Residues aspartate 10, lysine 31, 58–67, threonine 117, arginine 179, glutamine 188, glycine 208, and arginine 209 contribute to the substrate site; that span reads DLKLHDIPNT. Residue lysine 60 is the Proton donor of the active site.

The protein belongs to the OMP decarboxylase family. Type 1 subfamily. As to quaternary structure, homodimer.

The catalysed reaction is orotidine 5'-phosphate + H(+) = UMP + CO2. The protein operates within pyrimidine metabolism; UMP biosynthesis via de novo pathway; UMP from orotate: step 2/2. Catalyzes the decarboxylation of orotidine 5'-monophosphate (OMP) to uridine 5'-monophosphate (UMP). In Staphylococcus aureus (strain USA300), this protein is Orotidine 5'-phosphate decarboxylase.